A 572-amino-acid chain; its full sequence is Vacuolar protein sorting-associated protein vps901 (572 aa).

2 stretches are compositionally biased toward basic and acidic residues: residues 1–31 (MDYPSFHEDPTKDESTVAEQRKGQSNEEKPL) and 39–53 (DEQRNAYNEHCKNHD). The disordered stretch occupies residues 1 to 108 (MDYPSFHEDP…HENNPGQQEI (108 aa)). Positions 69-80 (QYEQTDSSSDQE) are enriched in polar residues. Residues 82 to 98 (MNEKQSLDKENRNDNIP) show a composition bias toward basic and acidic residues. In terms of domain architecture, VPS9 spans 219-357 (VEEDRVLSEK…IETLDCSSLT (139 aa)). The segment at 430–502 (QIDTPESKEY…IVHEEQPVDD (73 aa)) is disordered. The segment covering 445 to 457 (PRGSSHSGSFTTD) has biased composition (polar residues). The region spanning 529–571 (REKAEAITALRAMFPAFDSEVIEVVLNAQQGRLSSSIDSLLEM) is the CUE domain.

Required for vacuolar protein sorting; may be required for the consumption of transport vesicles containing vacuolar protein precursors. Required for vacuolar fusion. The sequence is that of Vacuolar protein sorting-associated protein vps901 (vps901) from Schizosaccharomyces pombe (strain 972 / ATCC 24843) (Fission yeast).